The following is a 232-amino-acid chain: Ribonuclease 3 (232 aa).

Residues 10-135 (ALKIYEATGY…LIGAMYMDGG (126 aa)) form the RNase III domain. A Mg(2+)-binding site is contributed by glutamate 48. Aspartate 52 is a catalytic residue. The Mg(2+) site is built by asparagine 121 and glutamate 124. Residue glutamate 124 is part of the active site. Positions 161–230 (DPKTALQEWV…AKLMLKKITE (70 aa)) constitute a DRBM domain.

Belongs to the ribonuclease III family. As to quaternary structure, homodimer. Mg(2+) is required as a cofactor.

It localises to the cytoplasm. It carries out the reaction Endonucleolytic cleavage to 5'-phosphomonoester.. Its function is as follows. Digests double-stranded RNA. Involved in the processing of primary rRNA transcript to yield the immediate precursors to the large and small rRNAs (23S and 16S). Processes some mRNAs, and tRNAs when they are encoded in the rRNA operon. Processes pre-crRNA and tracrRNA of type II CRISPR loci if present in the organism. The chain is Ribonuclease 3 from Anaplasma marginale (strain Florida).